Consider the following 1190-residue polypeptide: DNA-directed RNA polymerase subunit beta (1190 aa).

This sequence belongs to the RNA polymerase beta chain family. In terms of assembly, the RNAP catalytic core consists of 2 alpha, 1 beta, 1 beta' and 1 omega subunit. When a sigma factor is associated with the core the holoenzyme is formed, which can initiate transcription.

The catalysed reaction is RNA(n) + a ribonucleoside 5'-triphosphate = RNA(n+1) + diphosphate. Its function is as follows. DNA-dependent RNA polymerase catalyzes the transcription of DNA into RNA using the four ribonucleoside triphosphates as substrates. The sequence is that of DNA-directed RNA polymerase subunit beta from Geobacillus thermodenitrificans (strain NG80-2).